We begin with the raw amino-acid sequence, 862 residues long: MNGHFAAVDNGNGSSPDSNAHSFEHGIQVINEDKQYNTNLNEYLNETHVAEAGFNYHLISVFGSQSTGKSTLLNHLFGTQFSVMSERERRQTTKGIWMSKNKNEGKMADNILVMDVEGTDGRERGEDQDFERKSALFALATSEVLIVNIWEHQVGLYQGANMGLLKTVFEVNMQLFLKDKQNQTRSLLFFVIRDHIGVTPLANLRNTLIQDLTHIWSSISKPAGLENSKIEDYFDFAFAALPHKILQPDKFISEVQNLGSRFIAGHRNKDSDATDDQELTGGVFLPEYHRRIPADGLSIYAEGIWDQIVSNKDLDLPTQQELLAQFRCDEIAREVQIAFDAAIAPLEEQQAESTRAGKPAVLPNLGQIGAEAREKCVKNFETQASRYHKGVYTTKRAELEDKIDNRLKALYQAHLTAAHKAGVTAFSEAVANAVKAGQKAGGAYEFAEIVEKQKTKTLEIFKKEAQSLAIPGVAWSNFKPQYLIFEKELDEVSARLRKEEMRRLAIRVERWVKSRLGDAIGLEFNKLGSGRGGSGAPESGEKPATEKDIWDRVWKAFISIVGEAESRFTDRAKSFEASDDEVQVGLWRLRRKSWVALREKIEEEVMESNILMKLRENFEDKFRYDEDGVPRIWRPSDDIEGIYTRARESTLGLVPLLSRFRLTSTSAPPDLIEFVGPQPHGVEPGDEEDLTPIGGVDEDEGKSLEEETTILSEPKKQDLVVRFKKMADGVYVEAKRSAIGGITQVPLYFYAVLLVLGWNEFVMVLRNPILFLLLLLISGGTYVAYSLNLLGPMMQMANAASTQGMEIGKAKLRDFLENHEGARGALGMPPKNAQRVESGISMDTLDSNGKRKETGLGAEDDI.

The segment at 1–21 (MNGHFAAVDNGNGSSPDSNAH) is disordered. Topologically, residues 1-744 (MNGHFAAVDN…KRSAIGGITQ (744 aa)) are cytoplasmic. Over residues 11 to 21 (GNGSSPDSNAH) the composition is skewed to polar residues. In terms of domain architecture, GB1/RHD3-type G spans 53–288 (GFNYHLISVF…LTGGVFLPEY (236 aa)). 63-70 (GSQSTGKS) serves as a coordination point for GTP. Positions 485–506 (FEKELDEVSARLRKEEMRRLAI) form a coiled coil. Residues 745 to 765 (VPLYFYAVLLVLGWNEFVMVL) form a helical membrane-spanning segment. At 766–768 (RNP) the chain is on the lumenal side. Residues 769–789 (ILFLLLLLISGGTYVAYSLNL) form a helical membrane-spanning segment. The Cytoplasmic portion of the chain corresponds to 790–862 (LGPMMQMANA…ETGLGAEDDI (73 aa)). Positions 840 to 862 (ISMDTLDSNGKRKETGLGAEDDI) are disordered.

The protein belongs to the TRAFAC class dynamin-like GTPase superfamily. GB1/RHD3 GTPase family. RHD3 subfamily.

The protein resides in the endoplasmic reticulum membrane. Functionally, cooperates with the reticulon proteins and tubule-shaping DP1 family proteins to generate and maintain the structure of the tubular endoplasmic reticulum network. Has GTPase activity, which is required for its function in ER organization. This is Protein sey1 (sey1) from Neurospora crassa (strain ATCC 24698 / 74-OR23-1A / CBS 708.71 / DSM 1257 / FGSC 987).